Reading from the N-terminus, the 391-residue chain is Glycerophosphocholine acyltransferase 1 (391 aa).

Residues 1 to 66 (MSNNEDPINE…IAKQAEEHES (66 aa)) lie on the Cytoplasmic side of the membrane. The helical transmembrane segment at 67–87 (FINKVTHLLGVLGFGGFCFLL) threads the bilayer. The Lumenal segment spans residues 88–92 (GARPQ). The helical transmembrane segment at 93–113 (DIPYVYCLFFFIFVPLRWIYY) threads the bilayer. Topologically, residues 114–119 (RFKKWH) are cytoplasmic. A helical membrane pass occupies residues 120-140 (YFLLDFCYYANTIFLVDLLLY). At 141–144 (PKDE) the chain is on the lumenal side. Residues 145–165 (KLFMVCFSFAEGPLAWALIVW) traverse the membrane as a helical segment. Residues 166–172 (RCSLVFS) are Cytoplasmic-facing. The chain crosses the membrane as a helical span at residues 173 to 193 (SVDKIVSVLIHLLPGLVFFTI). Over 194-226 (RWWNPATFEAMHPEGTSGRASWPYVEDKSFLFT) the chain is Lumenal. A helical membrane pass occupies residues 227–247 (WLFLVPLVAYFLWQLLYFLIV). Over 248 to 294 (NVLRRQRLLRDPEVMTSYRELSKKAQKANNVWWRLSGLLGDQNRMLM) the chain is Cytoplasmic. The chain crosses the membrane as a helical span at residues 295 to 315 (YILLQALFTVATTALTVPIFL). Residues 316–318 (SYE) lie on the Lumenal side of the membrane. The helical transmembrane segment at 319-339 (LHAVFQILKVSAAVWNGGSFL) threads the bilayer. Over 340 to 391 (LDVMPRQVILKEKKKSELQPAHIQQYHSEPKQDQSPNSMEIRMKTIHSAEEQ) the chain is Cytoplasmic. Residues 354-391 (KSELQPAHIQQYHSEPKQDQSPNSMEIRMKTIHSAEEQ) form a disordered region. Basic and acidic residues predominate over residues 380-391 (IRMKTIHSAEEQ).

It belongs to the GPC1 family.

The protein localises to the membrane. The catalysed reaction is sn-glycerol 3-phosphocholine + an acyl-CoA = a monoacyl-sn-glycero-3-phosphocholine + CoA. It catalyses the reaction sn-glycero-3-phosphoethanolamine + an acyl-CoA = a monoacyl-sn-glycero-3-phosphoethanolamine + CoA. It carries out the reaction sn-glycerol 3-phosphocholine + hexadecanoyl-CoA = hexadecanoyl-sn-glycero-3-phosphocholine + CoA. The enzyme catalyses (9Z)-hexadecenoyl-CoA + sn-glycerol 3-phosphocholine = (9Z-hexadecenoyl)-sn-glycero-3-phosphocholine + CoA. The catalysed reaction is (9Z,12Z)-octadecadienoyl-CoA + sn-glycerol 3-phosphocholine = (9Z,12Z-octadecadienoyl)-sn-glycero-3-phosphocholine + CoA. It catalyses the reaction (12R)-hydroxy-(9Z)-octadecenoyl-CoA + sn-glycerol 3-phosphocholine = (12R-hydroxy-9Z-octadecenoyl)-sn-glycero-3-phosphocholine + CoA. It carries out the reaction (9Z,12Z,15Z)-octadecatrienoyl-CoA + sn-glycerol 3-phosphocholine = (9Z,12Z,15Z-octadecatrienoyl)-sn-glycero-3-phosphocholine + CoA. The enzyme catalyses sn-glycerol 3-phosphocholine + (9Z)-octadecenoyl-CoA = (9Z-octadecenoyl)-sn-glycero-3-phosphocholine + CoA. In terms of biological role, glycerophosphocholine acyltransferase (GPCAT) that utilizes acyl-CoA to acylate glycero-3-phosphocholine (GPC), forming lysophosphatidylcholine (LPC). Shows broad acyl specificities with a preference for 16:0-CoA, polyunsaturated acyl-CoA, and the hydroxylated ricinoleoyl-CoA. Also catalyzes the acylation of glycero-3-phosphoethanolamine (GPE) with acyl-CoA. In addition to acyl-CoA, GPCAT efficiently utilizes LPC and lysophosphatidylethanolamine (LPE) as acyl donors in the acylation of GPC. Contributes to the maintenance of phosphatidylcholine (PC) homeostasis and might also have specific functions in acyl editing of PC, such as transferring acyl groups modified at the sn-2 position of PC to the sn-1. This chain is Glycerophosphocholine acyltransferase 1, found in Ricinus communis (Castor bean).